Consider the following 434-residue polypeptide: Angio-associated migratory cell protein (434 aa).

Residues 1–63 (MESESESGAA…EEEEEEGNEE (63 aa)) are disordered. Position 20 is a phosphoserine (serine 20). Positions 39–62 (DPDDLAQEMEDVDFEEEEEEEGNE) are enriched in acidic residues. WD repeat units lie at residues 89–129 (LHSA…LLFE), 132–171 (GHKD…EVWS), 173–212 (EAGD…KTFQ), 214–254 (PNCP…HVLK), 258–299 (GHQG…GVFR), 315–354 (SESN…LRHQ), 356–395 (QHQS…LLTD), and 398–433 (GHTA…QRPD).

The protein localises to the cell membrane. It localises to the cytoplasm. Its function is as follows. Plays a role in angiogenesis and cell migration. In smooth muscle cell migration, may act through the RhoA pathway. In Pongo abelii (Sumatran orangutan), this protein is Angio-associated migratory cell protein (AAMP).